Here is a 267-residue protein sequence, read N- to C-terminus: Thiamine thiazole synthase (267 aa).

NAD(+) contacts are provided by residues S41, 60 to 61 (ER), G68, V132, and 160 to 162 (HVD). Fe cation is bound by residues D162 and H177. Residue M227 coordinates NAD(+). R237 serves as a coordination point for glycine.

It belongs to the THI4 family. Homooctamer; tetramer of dimers. It depends on Fe(2+) as a cofactor.

It catalyses the reaction hydrogen sulfide + glycine + NAD(+) = ADP-5-ethyl-4-methylthiazole-2-carboxylate + nicotinamide + 3 H2O + H(+). Its pathway is cofactor biosynthesis; thiamine diphosphate biosynthesis. Functionally, involved in the biosynthesis of the thiazole moiety of thiamine. Catalyzes the conversion of NAD and glycine to adenosine diphosphate 5-(2-hydroxyethyl)-4-methylthiazole-2-carboxylate (ADT), an adenylated thiazole intermediate, using free sulfide as a source of sulfur. The chain is Thiamine thiazole synthase from Saccharolobus islandicus (strain L.S.2.15 / Lassen #1) (Sulfolobus islandicus).